Consider the following 152-residue polypeptide: Non-specific lipid transfer protein GPI-anchored 8 (152 aa).

An N-terminal signal peptide occupies residues 1-23 (MNITRILGVVTTVVILYSVQVTA). 3 cysteine pairs are disulfide-bonded: C42-C56, C57-C98, and C70-C107. N108 carries N-linked (GlcNAc...) asparagine glycosylation. S124 is lipidated: GPI-anchor amidated serine. The propeptide at 125–152 (GNSFSTKKNTALAITFFGFSFVFLGMII) is removed in mature form.

It belongs to the plant LTP family.

The protein resides in the cell membrane. Probable lipid transfer protein. In Arabidopsis thaliana (Mouse-ear cress), this protein is Non-specific lipid transfer protein GPI-anchored 8.